A 64-amino-acid chain; its full sequence is Putative antitoxin MJ0975 (64 aa).

The protein belongs to the UPF0165 family.

Possibly the antitoxin component of a type II toxin-antitoxin (TA) system. Its cognate toxin is VapC2 (Potential). This is Putative antitoxin MJ0975 (vapB2) from Methanocaldococcus jannaschii (strain ATCC 43067 / DSM 2661 / JAL-1 / JCM 10045 / NBRC 100440) (Methanococcus jannaschii).